Reading from the N-terminus, the 87-residue chain is U3-theraphotoxin-Hhn1a 15 (87 aa).

Residues 1–24 (MVNMKASMFLTFAGLVLLLVVCYA) form the signal peptide. A propeptide spanning residues 25–52 (SESEEKEFPKEMLSSIFAVDNDFKQEER) is cleaved from the precursor. Intrachain disulfides connect Cys54-Cys67, Cys61-Cys72, and Cys66-Cys79.

The protein belongs to the neurotoxin 10 (Hwtx-1) family. 51 (Hntx-8) subfamily. Hntx-8 sub-subfamily. In terms of tissue distribution, expressed by the venom gland.

The protein resides in the secreted. In terms of biological role, ion channel inhibitor. This Cyriopagopus hainanus (Chinese bird spider) protein is U3-theraphotoxin-Hhn1a 15.